Consider the following 393-residue polypeptide: Protein TsgA (393 aa).

Transmembrane regions (helical) follow at residues 11–31 (WISFLSYALTGALVIVTGMVM), 51–71 (FLNAGILISIFLNAWLMEIVP), 78–98 (FGFLLMVLAVAGLMFSHSLAL), 101–121 (TAMFILGVVSGITMSIGTFLI), 140–160 (FFSMAGMIFPMIAAFLLAHSI), 162–182 (WYWVYACIGLVYVAIFILTFG), 206–226 (IGVLFLSVAALCYILGQLGFI), 245–265 (TLVSNFWMSYMVGMWAFSFIL), 273–293 (ILTVLAGLAAILMYVFNTGTP), 297–317 (AWSILALGFFSSAIYTTIITL), 332–352 (FVLTCGTIGTMLTFVVTGPIV), and 361–381 (LLTANGLYAVVFVMCFLLGFV).

Belongs to the major facilitator superfamily. TsgA family.

The protein localises to the cell inner membrane. The chain is Protein TsgA from Shigella boydii serotype 18 (strain CDC 3083-94 / BS512).